A 426-amino-acid polypeptide reads, in one-letter code: 3-phosphoshikimate 1-carboxyvinyltransferase (426 aa).

3-phosphoshikimate contacts are provided by Lys-21, Ser-22, and Arg-26. Lys-21 is a binding site for phosphoenolpyruvate. Positions 91 and 119 each coordinate phosphoenolpyruvate. Positions 162, 163, 164, 190, 304, and 331 each coordinate 3-phosphoshikimate. A phosphoenolpyruvate-binding site is contributed by Gln-164. Residue Asp-304 is the Proton acceptor of the active site. Residues Arg-335, Arg-377, and Lys-403 each contribute to the phosphoenolpyruvate site.

It belongs to the EPSP synthase family. In terms of assembly, monomer.

It localises to the cytoplasm. The catalysed reaction is 3-phosphoshikimate + phosphoenolpyruvate = 5-O-(1-carboxyvinyl)-3-phosphoshikimate + phosphate. Its pathway is metabolic intermediate biosynthesis; chorismate biosynthesis; chorismate from D-erythrose 4-phosphate and phosphoenolpyruvate: step 6/7. Its function is as follows. Catalyzes the transfer of the enolpyruvyl moiety of phosphoenolpyruvate (PEP) to the 5-hydroxyl of shikimate-3-phosphate (S3P) to produce enolpyruvyl shikimate-3-phosphate and inorganic phosphate. This chain is 3-phosphoshikimate 1-carboxyvinyltransferase, found in Clostridium kluyveri (strain ATCC 8527 / DSM 555 / NBRC 12016 / NCIMB 10680 / K1).